The chain runs to 915 residues: Metabotropic glutamate receptor 7 (915 aa).

The first 34 residues, M1 to G34, serve as a signal peptide directing secretion. The Extracellular segment spans residues Q35–W590. Residues C67 and C109 are joined by a disulfide bond. An N-linked (GlcNAc...) asparagine glycan is attached at N98. L-glutamate-binding positions include S159, A180–T182, Y230, and D314. Intrachain disulfides connect C249–C541, C374–C390, C430–C437, C523–C542, C527–C545, C548–C560, and C563–C576. K407 provides a ligand contact to L-glutamate. N-linked (GlcNAc...) asparagine glycans are attached at residues N458 and N486. N572 carries N-linked (GlcNAc...) asparagine glycosylation. A helical transmembrane segment spans residues A591–Y615. Residues N616–E627 are Cytoplasmic-facing. Residues L628–A648 traverse the membrane as a helical segment. Over K649–V654 the chain is Extracellular. The helical transmembrane segment at C655–T675 threads the bilayer. At K676–Q702 the chain is on the cytoplasmic side. Residues L703 to V723 form a helical membrane-spanning segment. Topologically, residues D724 to D753 are extracellular. A helical membrane pass occupies residues L754 to I775. At K776–K788 the chain is on the cytoplasmic side. Residues P789–G810 traverse the membrane as a helical segment. The Extracellular portion of the chain corresponds to T811 to L825. Residues T826–F850 form a helical membrane-spanning segment. Residues H851 to I915 are Cytoplasmic-facing. Residues S874–N895 form a disordered region. Residues K879–L892 are compositionally biased toward basic and acidic residues. S900 carries the post-translational modification Phosphoserine.

Belongs to the G-protein coupled receptor 3 family. Homodimer. Interacts with PICK1.

It localises to the cell membrane. G-protein coupled receptor activated by glutamate that regulates axon outgrowth through the MAPK-cAMP-PKA signaling pathway during neuronal development. Ligand binding causes a conformation change that triggers signaling via guanine nucleotide-binding proteins (G proteins) and modulates the activity of downstream effectors, such as adenylate cyclase that it inhibits. The chain is Metabotropic glutamate receptor 7 (Grm7) from Mus musculus (Mouse).